The sequence spans 381 residues: Bifunctional enzyme Fae/Hps (381 aa).

Residues 1–150 (MIKFGEAVLG…KEKYRALHPL (150 aa)) form a formaldehyde-activating enzyme region. The 3-hexulose-6-phosphate synthase stretch occupies residues 151 to 381 (VGFRDVRLEY…DEDEDIGEEL (231 aa)).

This sequence in the N-terminal section; belongs to the formaldehyde-activating enzyme family. The protein in the C-terminal section; belongs to the HPS/KGPDC family. HPS subfamily.

The catalysed reaction is 5,6,7,8-tetrahydromethanopterin + formaldehyde = 5,10-methylenetetrahydromethanopterin + H2O. The enzyme catalyses D-ribulose 5-phosphate + formaldehyde = D-arabino-hex-3-ulose 6-phosphate. It functions in the pathway carbohydrate biosynthesis; D-ribose 5-phosphate biosynthesis. Catalyzes the condensation of formaldehyde with tetrahydromethanopterin (H(4)MPT) to 5,10-methylenetetrahydromethanopterin. Its function is as follows. Catalyzes the reversible formation of ribulose-5-phosphate and formaldehyde from 3-hexulose-6-phosphate. This is Bifunctional enzyme Fae/Hps from Methanocaldococcus jannaschii (strain ATCC 43067 / DSM 2661 / JAL-1 / JCM 10045 / NBRC 100440) (Methanococcus jannaschii).